A 677-amino-acid polypeptide reads, in one-letter code: WD repeat-containing protein 43 (677 aa).

WD repeat units follow at residues 11 to 51 (PLAP…LHQE), 57 to 119 (HLSG…LHSK), 124 to 163 (GHDN…VKCK), 166 to 205 (GDNS…RHFT), 207 to 259 (HATP…KEKS), and 267 to 309 (TDEP…YCKK). Serine 77 carries the post-translational modification Phosphoserine. Lysine 309 is covalently cross-linked (Glycyl lysine isopeptide (Lys-Gly) (interchain with G-Cter in SUMO1); alternate). Lysine 309 is covalently cross-linked (Glycyl lysine isopeptide (Lys-Gly) (interchain with G-Cter in SUMO2); alternate). Threonine 321 carries the post-translational modification Phosphothreonine. Residue lysine 384 forms a Glycyl lysine isopeptide (Lys-Gly) (interchain with G-Cter in SUMO1); alternate linkage. Lysine 384 is covalently cross-linked (Glycyl lysine isopeptide (Lys-Gly) (interchain with G-Cter in SUMO2); alternate). Threonine 394 bears the Phosphothreonine mark. A phosphoserine mark is found at serine 399, serine 431, serine 437, and serine 590. Disordered regions lie at residues 414–445 (AIKP…LGAM) and 582–677 (SEKT…SEEE). The span at 582 to 592 (SEKTKGATSPG) shows a compositional bias: polar residues. Over residues 600–652 (EEESSEEESDDEIADKDSEDNWDEDEEESESEKDEDVEEEDEDAEGKDEENGE) the composition is skewed to acidic residues. Over residues 653–663 (DRDTASEKELN) the composition is skewed to basic and acidic residues. At threonine 656 the chain carries Phosphothreonine. Phosphoserine is present on serine 658. The span at 664–677 (GDSDLDPENESEEE) shows a compositional bias: acidic residues.

Belongs to the UTP5 family. As to quaternary structure, part of the small subunit (SSU) processome, composed of more than 70 proteins and the RNA chaperone small nucleolar RNA (snoRNA) U3. May be a component of the proposed t-UTP subcomplex of the ribosomal small subunit (SSU) processome containing at least UTP4, WDR43, HEATR1, UTP15, WDR75. Binds to RNA; binding is required for its chromatin association. Interacts with CDK9, DDX21 and SUPT6H. Interacts with RNA polymerase II. Interacts directly with UTP4 and UTP15.

It is found in the nucleus. The protein localises to the nucleolus. Its subcellular location is the nucleolus fibrillar center. The protein resides in the nucleoplasm. Its function is as follows. Ribosome biogenesis factor that coordinates hyperactive transcription and ribogenesis. Part of the small subunit (SSU) processome, first precursor of the small eukaryotic ribosomal subunit. During the assembly of the SSU processome in the nucleolus, many ribosome biogenesis factors, an RNA chaperone and ribosomal proteins associate with the nascent pre-rRNA and work in concert to generate RNA folding, modifications, rearrangements and cleavage as well as targeted degradation of pre-ribosomal RNA by the RNA exosome. Involved in nucleolar processing of pre-18S ribosomal RNA. Required for optimal pre-ribosomal RNA transcription by RNA polymerase I. Essential for stem cell pluripotency and embryonic development. In the nucleoplasm, recruited by promoter-associated/nascent transcripts and transcription to active promoters where it facilitates releases of elongation factor P-TEFb and paused RNA polymerase II to allow transcription elongation and maintain high-level expression of its targets genes. The protein is WD repeat-containing protein 43 of Homo sapiens (Human).